We begin with the raw amino-acid sequence, 333 residues long: Eukaryotic translation initiation factor 2 subunit 2 (333 aa).

Disordered stretches follow at residues 1–119 (MSGD…DLDI) and 139–164 (ILEK…NQTG). Serine 2 is modified (N-acetylserine). Residues serine 2 and serine 13 each carry the phosphoserine modification. The span at 13-22 (SKKKKKKKKP) shows a compositional bias: basic residues. A phosphothreonine mark is found at threonine 31 and threonine 36. The span at 40 to 51 (ETKEVEPEPTED) shows a compositional bias: basic and acidic residues. Serine 67 is modified (phosphoserine). Positions 96 to 105 (EGVKDLKIES) are enriched in basic and acidic residues. Lysine 102 participates in a covalent cross-link: Glycyl lysine isopeptide (Lys-Gly) (interchain with G-Cter in SUMO2). Position 105 is a phosphoserine (serine 105). Acidic residues-rich tracts occupy residues 106-118 (DVQE…DDLD) and 139-149 (ILEKDEALEDE). A Phosphothreonine modification is found at threonine 111. A phosphoserine mark is found at serine 158 and serine 218. An N6-acetyllysine mark is found at lysine 265 and lysine 293. A C4-type zinc finger spans residues 281–305 (CHTCRSPDTILQKDTRLYFLQCETC).

Belongs to the eIF-2-beta/eIF-5 family. Eukaryotic translation initiation factor 2 eIF2 is a heterotrimeric complex composed of an alpha (EIF2S1), a beta (EIF2S2) and a gamma (EIF2S3) chain. eIF2 is member of the 43S pre-initiation complex (43S PIC). eIF2 forms a complex with at least CELF1/CUGBP1, CALR, CALR3, EIF2S1, EIF2S2, HSP90B1 and HSPA5. Interacts with BZW2/5MP1. Interacts with EIF5.

The protein localises to the cytoplasm. Its subcellular location is the cytosol. Functionally, component of the eIF2 complex that functions in the early steps of protein synthesis by forming a ternary complex with GTP and initiator tRNA. This complex binds to a 40S ribosomal subunit, followed by mRNA binding to form the 43S pre-initiation complex (43S PIC). Junction of the 60S ribosomal subunit to form the 80S initiation complex is preceded by hydrolysis of the GTP bound to eIF2 and release of an eIF2-GDP binary complex. In order for eIF2 to recycle and catalyze another round of initiation, the GDP bound to eIF2 must exchange with GTP by way of a reaction catalyzed by eIF2B. The polypeptide is Eukaryotic translation initiation factor 2 subunit 2 (EIF2S2) (Pongo abelii (Sumatran orangutan)).